The following is a 569-amino-acid chain: Probable ABC transporter permease protein y4fN (569 aa).

Transmembrane regions (helical) follow at residues Val10–Pro30, Val68–Val88, Gly98–Gly118, Phe121–Pro141, Phe145–Leu165, Val196–Ala216, Pro247–Leu267, Leu304–Phe324, Met363–Val383, Ile395–Ala415, Leu426–Leu446, Val480–Leu500, and Ala534–Ile554. In terms of domain architecture, ABC transmembrane type-1 1 spans Leu64 to Ser268. The region spanning Phe357–Val551 is the ABC transmembrane type-1 2 domain.

The protein belongs to the binding-protein-dependent transport system permease family. CysTW subfamily.

Its subcellular location is the cell inner membrane. Probably part of the binding-protein-dependent transport system y4fNOP. Probably responsible for the translocation of the substrate across the membrane. This chain is Probable ABC transporter permease protein y4fN, found in Sinorhizobium fredii (strain NBRC 101917 / NGR234).